The following is a 376-amino-acid chain: Protein insensitive (376 aa).

Residues 50–79 adopt a coiled-coil conformation; that stretch reads QVEVENRALRDKVRYLEAKLQQHKDLLSQI. The BEN domain maps to 258 to 356; that stretch reads GPNNTCVPAS…TKCADENKMM (99 aa).

Homodimer. Interacts (via BEN domain) with Su(H). Interacts with Cp190.

The protein localises to the nucleus. In terms of biological role, can act as both a transcriptional repressor and corepressor. Represses the expression of genes involved in neural development and preferentially binds palindromic sequence 5'-CCAATTGG-3' to mediate transcriptional repression. Acts as a corepressor for suppressor of hairless (Su(H)) and inhibits Notch signaling during peripheral nervous system development. This chain is Protein insensitive (insv), found in Drosophila melanogaster (Fruit fly).